The sequence spans 81 residues: Acyl carrier protein (81 aa).

A Carrier domain is found at 2–80 (ASKEEILAGL…DAVDFIDGAQ (79 aa)). Ser40 carries the post-translational modification O-(pantetheine 4'-phosphoryl)serine.

Belongs to the acyl carrier protein (ACP) family. Post-translationally, 4'-phosphopantetheine is transferred from CoA to a specific serine of apo-ACP by AcpS. This modification is essential for activity because fatty acids are bound in thioester linkage to the sulfhydryl of the prosthetic group.

It is found in the cytoplasm. Its pathway is lipid metabolism; fatty acid biosynthesis. Carrier of the growing fatty acid chain in fatty acid biosynthesis. The chain is Acyl carrier protein from Micrococcus luteus (strain ATCC 4698 / DSM 20030 / JCM 1464 / CCM 169 / CCUG 5858 / IAM 1056 / NBRC 3333 / NCIMB 9278 / NCTC 2665 / VKM Ac-2230) (Micrococcus lysodeikticus).